Consider the following 117-residue polypeptide: Large ribosomal subunit protein uL18 (117 aa).

The protein belongs to the universal ribosomal protein uL18 family. As to quaternary structure, part of the 50S ribosomal subunit; part of the 5S rRNA/L5/L18/L25 subcomplex. Contacts the 5S and 23S rRNAs.

In terms of biological role, this is one of the proteins that bind and probably mediate the attachment of the 5S RNA into the large ribosomal subunit, where it forms part of the central protuberance. The polypeptide is Large ribosomal subunit protein uL18 (Phytoplasma australiense).